The primary structure comprises 380 residues: Cytochrome b (380 aa).

4 consecutive transmembrane segments (helical) span residues 34–54, 78–99, 114–134, and 179–199; these read FGSL…LLAM, WLIR…FLHI, WNTG…GYVL, and FFAL…IHLT. Heme b contacts are provided by His84 and His98. Heme b-binding residues include His183 and His197. His202 serves as a coordination point for a ubiquinone. The next 4 helical transmembrane spans lie at 227-247, 289-309, 321-341, and 348-368; these read IKDI…ALFS, LGGV…PFLH, LSQT…WIGS, and FIII…ILFP.

This sequence belongs to the cytochrome b family. The cytochrome bc1 complex contains 11 subunits: 3 respiratory subunits (MT-CYB, CYC1 and UQCRFS1), 2 core proteins (UQCRC1 and UQCRC2) and 6 low-molecular weight proteins (UQCRH/QCR6, UQCRB/QCR7, UQCRQ/QCR8, UQCR10/QCR9, UQCR11/QCR10 and a cleavage product of UQCRFS1). This cytochrome bc1 complex then forms a dimer. Heme b is required as a cofactor.

The protein resides in the mitochondrion inner membrane. Its function is as follows. Component of the ubiquinol-cytochrome c reductase complex (complex III or cytochrome b-c1 complex) that is part of the mitochondrial respiratory chain. The b-c1 complex mediates electron transfer from ubiquinol to cytochrome c. Contributes to the generation of a proton gradient across the mitochondrial membrane that is then used for ATP synthesis. This chain is Cytochrome b (MT-CYB), found in Alectoris chukar (Chukar partridge).